Reading from the N-terminus, the 473-residue chain is tRNA-2-methylthio-N(6)-dimethylallyladenosine synthase (473 aa).

An MTTase N-terminal domain is found at 5–125 (RKLHIKSYGC…LPQLLARAKA (121 aa)). Residues C14, C50, C88, C166, C170, and C173 each coordinate [4Fe-4S] cluster. Positions 152–384 (RARGISAFVT…QNLIDSQQSA (233 aa)) constitute a Radical SAM core domain. Residues 387–449 (RAAVGTTVDV…RYSLLGSLAS (63 aa)) enclose the TRAM domain. A compositionally biased stretch (low complexity) spans 453-462 (SRASADDAPP). Residues 453–473 (SRASADDAPPVGASSPAIMGV) form a disordered region.

This sequence belongs to the methylthiotransferase family. MiaB subfamily. Monomer. The cofactor is [4Fe-4S] cluster.

It localises to the cytoplasm. The enzyme catalyses N(6)-dimethylallyladenosine(37) in tRNA + (sulfur carrier)-SH + AH2 + 2 S-adenosyl-L-methionine = 2-methylsulfanyl-N(6)-dimethylallyladenosine(37) in tRNA + (sulfur carrier)-H + 5'-deoxyadenosine + L-methionine + A + S-adenosyl-L-homocysteine + 2 H(+). In terms of biological role, catalyzes the methylthiolation of N6-(dimethylallyl)adenosine (i(6)A), leading to the formation of 2-methylthio-N6-(dimethylallyl)adenosine (ms(2)i(6)A) at position 37 in tRNAs that read codons beginning with uridine. This is tRNA-2-methylthio-N(6)-dimethylallyladenosine synthase from Nitrobacter hamburgensis (strain DSM 10229 / NCIMB 13809 / X14).